A 581-amino-acid chain; its full sequence is Tetratricopeptide repeat and J domain-containing co-chaperone DNJ1 (581 aa).

The first 19 residues, 1-19 (MKATLLPSLLALSLTLCLA), serve as a signal peptide directing secretion. 7 TPR repeats span residues 48–81 (ASQH…DPSS), 82–115 (WLTY…NPKF), 116–149 (DKAY…RAEK), 221–254 (LETR…TPSP), 257–293 (LRRL…DPDN), 378–411 (LELH…DPDN), and 412–445 (VEAT…SGRT). A glycan (N-linked (GlcNAc...) asparagine) is linked at N293. A J domain is found at 467–528 (DYYKVLGVKR…ELRKKYDQGD (62 aa)). The disordered stretch occupies residues 522-544 (KKYDQGDDPNDPMGGQQGGYGNP).

Interacts with the ER chaperone BIP1.

It is found in the endoplasmic reticulum lumen. Its function is as follows. Endoplasmic reticulum (ER) protein that functions as a co-chaperone for BIP1 during ER stress. Might be specifically involved in the refolding of N-glycosylated proteins. The sequence is that of Tetratricopeptide repeat and J domain-containing co-chaperone DNJ1 from Mycosarcoma maydis (Corn smut fungus).